A 260-amino-acid polypeptide reads, in one-letter code: Uroplakin-1b (260 aa).

Residues 1–15 (MAKDDSTVRCFQGLL) lie on the Cytoplasmic side of the membrane. A helical transmembrane segment spans residues 16–36 (IFGHVIVGMCGIALTAECIFF). At 37-59 (VSDQHSLYPLLEATNNDDIFGAA) the chain is on the extracellular side. The chain crosses the membrane as a helical span at residues 60 to 80 (WIGMFVGICLFCLSVLAIVGI). At 81–86 (MKSNRK) the chain is on the cytoplasmic side. Residues 87-107 (ILLAYFIMMFIVYGFEVASCI) form a helical membrane-spanning segment. Over 108–229 (TAATQRDFFT…ELISGPMDRH (122 aa)) the chain is Extracellular. The helical transmembrane segment at 230-250 (AWGVAWFGFAILCWTFWVLLG) threads the bilayer. The Cytoplasmic segment spans residues 251-260 (TMFYWSRIEY).

The protein belongs to the tetraspanin (TM4SF) family. In terms of assembly, heterodimer with uroplakin-3A (UPK3A) or uroplakin-3B (UPK3B). N-glycosylated with high-mannose oligosaccharides. In terms of tissue distribution, bladder epithelium.

It localises to the membrane. Component of the asymmetric unit membrane (AUM); a highly specialized biomembrane elaborated by terminally differentiated urothelial cells. May play an important role in normal bladder epithelial physiology, possibly in regulating membrane permeability of superficial umbrella cells or in stabilizing the apical membrane through AUM/cytoskeletal interactions. In Mus musculus (Mouse), this protein is Uroplakin-1b (Upk1b).